The chain runs to 215 residues: ATP phosphoribosyltransferase (215 aa).

This sequence belongs to the ATP phosphoribosyltransferase family. Short subfamily. Heteromultimer composed of HisG and HisZ subunits.

The protein resides in the cytoplasm. The catalysed reaction is 1-(5-phospho-beta-D-ribosyl)-ATP + diphosphate = 5-phospho-alpha-D-ribose 1-diphosphate + ATP. It functions in the pathway amino-acid biosynthesis; L-histidine biosynthesis; L-histidine from 5-phospho-alpha-D-ribose 1-diphosphate: step 1/9. Catalyzes the condensation of ATP and 5-phosphoribose 1-diphosphate to form N'-(5'-phosphoribosyl)-ATP (PR-ATP). Has a crucial role in the pathway because the rate of histidine biosynthesis seems to be controlled primarily by regulation of HisG enzymatic activity. This chain is ATP phosphoribosyltransferase, found in Lachnoclostridium phytofermentans (strain ATCC 700394 / DSM 18823 / ISDg) (Clostridium phytofermentans).